Consider the following 397-residue polypeptide: DnaJ homolog subfamily A member 4 (397 aa).

One can recognise a J domain in the interval 4–70; it reads ETQYYDILGV…RDVYDQGGEQ (67 aa). Phosphoserine is present on serine 18. The segment at 122 to 206 adopts a CR-type zinc-finger fold; that stretch reads GVTKKLALQK…CSGAKVIREK (85 aa). 8 residues coordinate Zn(2+): cysteine 135, cysteine 138, cysteine 151, cysteine 154, cysteine 178, cysteine 181, cysteine 194, and cysteine 197. 4 CXXCXGXG motif repeats span residues 135–142, 151–158, 178–185, and 194–201; these read CEKCEGVG, CPLCKGRG, CIECKGQG, and CESCSGAK. Cysteine methyl ester is present on cysteine 394. Cysteine 394 carries the S-farnesyl cysteine lipid modification. Residues 395–397 constitute a propeptide, removed in mature form; the sequence is QTA.

It localises to the membrane. The protein is DnaJ homolog subfamily A member 4 (DNAJA4) of Homo sapiens (Human).